The chain runs to 430 residues: Histone acetyltransferase type B subunit 2 (430 aa).

5 WD repeats span residues 129 to 169 (PHDG…ALTT), 180 to 220 (GHTA…FTSS), 233 to 273 (RHTD…EEEA), 279 to 319 (AHSK…QRLH), and 323 to 363 (GHED…EEQT). Residues 365–369 (EDAED) are interaction with the histone H4 N-terminus. A WD 6 repeat occupies 380-420 (GHTNRISEFSWCPNERWVVGSLADDNILQIWSPSRVIWGRD). S425 bears the Phosphoserine mark.

Belongs to the WD repeat RBAP46/RBAP48/MSI1 family. As to quaternary structure, component of the HAT-B complex composed of at least hat1 and hat2. The HAT-B complex binds to histone H4 tail. Component of the CENP-A recruiting complex composed of at least mis16, mis19, mis19 and mis20.

The protein resides in the cytoplasm. It localises to the nucleus. Its subcellular location is the chromosome. It is found in the centromere. The protein localises to the kinetochore. Its function is as follows. Regulatory subunit of the histone acetylase B (HAT-B) complex. The complex acetylates 'Lys-12' of histone H4 which is required for telomeric silencing. Component of the CENP-A recruiting complex that ensures the integrity of mitotic spindles through maintenance of kinetochore factors mis6/CENP-I and cnp1/CENP-A. Maintains the deacetylated state of histones specifically in the central core of the centromeres. This is Histone acetyltransferase type B subunit 2 (mis16) from Schizosaccharomyces pombe (strain 972 / ATCC 24843) (Fission yeast).